A 153-amino-acid chain; its full sequence is Calmodulin-like protein 4 (153 aa).

4 EF-hand domains span residues 8–43, 44–79, 81–116, and 117–152; these read DQINEYKECFSLYDKQQRGKIKATDLLVSMRCLGAS, PTPGEVQRHLQTHGIDKNGELDFSTFLTIMHMQIKQ, DPKKEILLAMLMADKEKKGYIMASELRSKLMKLGEK, and LTHKEVDDLFKEAGIEPNGQVKYDTFIQRITIPVRD.

Belongs to the calmodulin family. Interacts with MYO7B; the interaction mediates the association of CALML4 with the IMAC/intermicrovillar adhesion complex. Interacts with MYO7A. In terms of tissue distribution, expressed in the small intestine, in both mature enterocytes on the villus surface and immature cells that reside in the crypt stem-cell niche.

The protein resides in the cell projection. Its subcellular location is the microvillus. In terms of biological role, as part of the intermicrovillar adhesion complex/IMAC plays a role in epithelial brush border differentiation, controlling microvilli organization and length. Acts as a light chain for MYO7B and is required for efficient targeting of the IMAC to the tips of border brush microvilli. This is Calmodulin-like protein 4 (Calml4) from Mus musculus (Mouse).